A 638-amino-acid chain; its full sequence is Chaperone protein HtpG (638 aa).

Residues 1–345 form an a; substrate-binding region; that stretch reads MTTETFEFQV…AQDLSLNVSR (345 aa). The tract at residues 346–560 is b; sequence EILQQDRHIR…AGELTPALEN (215 aa). Positions 561-638 are c; the sequence is MYRAMGQEVP…LMADRLERTL (78 aa).

It belongs to the heat shock protein 90 family. In terms of assembly, homodimer.

It is found in the cytoplasm. Molecular chaperone. Has ATPase activity. This Streptomyces coelicolor (strain ATCC BAA-471 / A3(2) / M145) protein is Chaperone protein HtpG.